The sequence spans 337 residues: Schlafen family member 1 (337 aa).

The disordered stretch occupies residues 147–166 (AGGRSPSARPSDRPGDDTQE). Basic and acidic residues predominate over residues 156 to 166 (PSDRPGDDTQE).

The protein belongs to the Schlafen family. Interacts with DNAJB6; promoting nuclear translocation and ability to promote cell-cycle arrest. As to expression, mainly expressed in the thymus, lymph node and spleen. Specifically expressed in T-lineage cells, but not in B-cells. Strongly up-regulated during the differentiation from CD4(+)CD8(+) double-positive (DP) to CD4(+) or CD8(+) single-positive (SP) thymocytes. Highly expressed in quiescent single-positive thymocytes and T-cells. The expression substantially decreases after TCR (T-cell receptor)-mediated activation.

The protein localises to the cytoplasm. The protein resides in the nucleus. Functionally, protein expressed in resting T-cells, which is required for maintaining T-cells in the quiescent state. Acts by promoting cell-cycle arrest of T-cells through inhibiting the expression of cyclin-D1 (CCND1). The polypeptide is Schlafen family member 1 (Mus musculus (Mouse)).